The primary structure comprises 462 residues: Tissue alpha-L-fucosidase (462 aa).

The signal sequence occupies residues 1–28 (MWDLKSEWWAVGFGLLLLLAASAQAGGL). 3 N-linked (GlcNAc...) asparagine glycosylation sites follow: Asn237, Asn264, and Asn378.

It belongs to the glycosyl hydrolase 29 family. In terms of assembly, homotetramer.

It is found in the lysosome. It catalyses the reaction an alpha-L-fucoside + H2O = L-fucose + an alcohol. The enzyme catalyses a neolactoside IV(2)-alpha-Fuc-nLc4Cer(d18:1(4E)) + H2O = a neolactoside nLc4Cer(d18:1(4E)) + L-fucose. The catalysed reaction is a neolactoside IV(2)-alpha-Fuc-nLc4Cer(d18:0) + H2O = a neolactoside nLc4Cer(d18:0) + L-fucose. Functionally, alpha-L-fucosidase is responsible for hydrolyzing the alpha-1,6-linked fucose joined to the reducing-end N-acetylglucosamine of the carbohydrate moieties of glycoproteins. The polypeptide is Tissue alpha-L-fucosidase (Fuca1) (Rattus norvegicus (Rat)).